The sequence spans 293 residues: Probable tRNA-splicing endonuclease subunit Sen2 (293 aa).

Residues Tyr-157, His-165, and Lys-204 contribute to the active site. The helical transmembrane segment at 267 to 287 (VVFNHWGVILGFTVLSGLLVY) threads the bilayer.

The protein belongs to the tRNA-intron endonuclease family. In terms of assembly, tRNA splicing endonuclease is a heterotetramer composed of SEN2, SEN15, SEN34/LENG5 and SEN54.

It localises to the nucleus. The protein localises to the membrane. The enzyme catalyses pretRNA = a 3'-half-tRNA molecule with a 5'-OH end + a 5'-half-tRNA molecule with a 2',3'-cyclic phosphate end + an intron with a 2',3'-cyclic phosphate and a 5'-hydroxyl terminus.. Constitutes one of the two catalytic subunit of the tRNA-splicing endonuclease complex, a complex responsible for identification and cleavage of the splice sites in pre-tRNA. It cleaves pre-tRNA at the 5'- and 3'-splice sites to release the intron. The products are an intron and two tRNA half-molecules bearing 2',3'-cyclic phosphate and 5'-OH termini. There are no conserved sequences at the splice sites, but the intron is invariably located at the same site in the gene, placing the splice sites an invariant distance from the constant structural features of the tRNA body. Probably carries the active site for 5'-splice site cleavage. This is Probable tRNA-splicing endonuclease subunit Sen2 from Oryza sativa subsp. japonica (Rice).